Consider the following 246-residue polypeptide: Small ribosomal subunit protein uS2 (246 aa).

It belongs to the universal ribosomal protein uS2 family. In terms of assembly, component of the small ribosomal subunit. Mature ribosomes consist of a small (40S) and a large (60S) subunit. The 40S subunit contains about 33 different proteins and 1 molecule of RNA (18S). The 60S subunit contains about 49 different proteins and 3 molecules of RNA (25S, 5.8S and 5S). Interacts with ribosomal protein S21.

It is found in the cytoplasm. Required for the assembly and/or stability of the 40S ribosomal subunit. Required for the processing of the 20S rRNA-precursor to mature 18S rRNA in a late step of the maturation of 40S ribosomal subunits. This chain is Small ribosomal subunit protein uS2, found in Leishmania infantum.